The following is a 77-amino-acid chain: DNA-directed RNA polymerase subunit Rpo5 (77 aa).

Belongs to the archaeal Rpo5/eukaryotic RPB5 RNA polymerase subunit family. Part of the RNA polymerase complex.

It localises to the cytoplasm. It carries out the reaction RNA(n) + a ribonucleoside 5'-triphosphate = RNA(n+1) + diphosphate. Functionally, DNA-dependent RNA polymerase (RNAP) catalyzes the transcription of DNA into RNA using the four ribonucleoside triphosphates as substrates. The polypeptide is DNA-directed RNA polymerase subunit Rpo5 (Methanosphaera stadtmanae (strain ATCC 43021 / DSM 3091 / JCM 11832 / MCB-3)).